The primary structure comprises 110 residues: UPF0132 membrane protein MJ1443 (110 aa).

Helical transmembrane passes span 15-35 (IEGALCYLFGVITGILFYILE), 49-69 (IILFGGLWVLSIILAFIPYGW), and 70-90 (MLSGLVNLAAFILWIVCMYKA).

The protein belongs to the UPF0132 family.

The protein localises to the cell membrane. The chain is UPF0132 membrane protein MJ1443 from Methanocaldococcus jannaschii (strain ATCC 43067 / DSM 2661 / JAL-1 / JCM 10045 / NBRC 100440) (Methanococcus jannaschii).